We begin with the raw amino-acid sequence, 221 residues long: PKHD-type hydroxylase P9215_13741 (221 aa).

The 95-residue stretch at 80–174 (RIHGTMFTKT…RFVVVGWIES (95 aa)) folds into the Fe2OG dioxygenase domain. 3 residues coordinate Fe cation: His98, Asp100, and His155. A 2-oxoglutarate-binding site is contributed by Arg165.

The cofactor is Fe(2+). Requires L-ascorbate as cofactor.

The polypeptide is PKHD-type hydroxylase P9215_13741 (Prochlorococcus marinus (strain MIT 9215)).